The sequence spans 272 residues: Ethanolamine ammonia-lyase small subunit (272 aa).

The adenosylcob(III)alamin site is built by Val-161, Glu-182, and Cys-211.

It belongs to the EutC family. The basic unit is a heterodimer which dimerizes to form tetramers. The heterotetramers trimerize; 6 large subunits form a core ring with 6 small subunits projecting outwards. Adenosylcob(III)alamin serves as cofactor.

It localises to the bacterial microcompartment. The enzyme catalyses ethanolamine = acetaldehyde + NH4(+). It functions in the pathway amine and polyamine degradation; ethanolamine degradation. Functionally, catalyzes the deamination of various vicinal amino-alcohols to oxo compounds. Allows this organism to utilize ethanolamine as the sole source of nitrogen and carbon in the presence of external vitamin B12. The chain is Ethanolamine ammonia-lyase small subunit from Pseudomonas putida (strain ATCC 700007 / DSM 6899 / JCM 31910 / BCRC 17059 / LMG 24140 / F1).